Here is a 325-residue protein sequence, read N- to C-terminus: Ribosomal RNA small subunit methyltransferase H (325 aa).

Residues 38 to 40 (GGY), Asp-55, Phe-82, Asp-103, and Gln-110 contribute to the S-adenosyl-L-methionine site. Disordered stretches follow at residues 256–275 (SGGDAAGSRHRPAPTAAARA) and 281–307 (PARKVRPGKAEEARNPRARSATLRSAV).

Belongs to the methyltransferase superfamily. RsmH family.

The protein localises to the cytoplasm. The enzyme catalyses cytidine(1402) in 16S rRNA + S-adenosyl-L-methionine = N(4)-methylcytidine(1402) in 16S rRNA + S-adenosyl-L-homocysteine + H(+). In terms of biological role, specifically methylates the N4 position of cytidine in position 1402 (C1402) of 16S rRNA. The chain is Ribosomal RNA small subunit methyltransferase H from Sphingopyxis alaskensis (strain DSM 13593 / LMG 18877 / RB2256) (Sphingomonas alaskensis).